Consider the following 533-residue polypeptide: Portal protein B (533 aa).

The protein belongs to the siphoviridae portal protein family. Homododecamer. Interacts with the terminase complex composed of two small and one large terminase subunits. Post-translationally, proteolytically cleaved by the viral protease during capsid maturation.

The protein resides in the virion. Functionally, forms the portal vertex of the capsid. This portal plays critical roles in head assembly, genome packaging, neck/tail attachment, and genome ejection. The portal protein multimerizes as a single ring-shaped homododecamer arranged around a central channel. Binds to the terminase subunits to form the packaging machine. The sequence is that of Portal protein B from Escherichia phage lambda (Bacteriophage lambda).